Here is a 158-residue protein sequence, read N- to C-terminus: NAD(P)H-quinone oxidoreductase subunit J, chloroplastic (158 aa).

This sequence belongs to the complex I 30 kDa subunit family. In terms of assembly, NDH is composed of at least 16 different subunits, 5 of which are encoded in the nucleus.

It is found in the plastid. The protein localises to the chloroplast thylakoid membrane. It catalyses the reaction a plastoquinone + NADH + (n+1) H(+)(in) = a plastoquinol + NAD(+) + n H(+)(out). It carries out the reaction a plastoquinone + NADPH + (n+1) H(+)(in) = a plastoquinol + NADP(+) + n H(+)(out). Its function is as follows. NDH shuttles electrons from NAD(P)H:plastoquinone, via FMN and iron-sulfur (Fe-S) centers, to quinones in the photosynthetic chain and possibly in a chloroplast respiratory chain. The immediate electron acceptor for the enzyme in this species is believed to be plastoquinone. Couples the redox reaction to proton translocation, and thus conserves the redox energy in a proton gradient. The chain is NAD(P)H-quinone oxidoreductase subunit J, chloroplastic from Piper cenocladum (Ant piper).